We begin with the raw amino-acid sequence, 704 residues long: Elongation factor G (704 aa).

The tr-type G domain occupies 8–291 (DKVRNIGIMA…AVVEYLASPV (284 aa)). Residues 17 to 24 (AHIDAGKT), 90 to 94 (DTPGH), and 144 to 147 (NKMD) each bind GTP.

It belongs to the TRAFAC class translation factor GTPase superfamily. Classic translation factor GTPase family. EF-G/EF-2 subfamily.

It is found in the cytoplasm. Catalyzes the GTP-dependent ribosomal translocation step during translation elongation. During this step, the ribosome changes from the pre-translocational (PRE) to the post-translocational (POST) state as the newly formed A-site-bound peptidyl-tRNA and P-site-bound deacylated tRNA move to the P and E sites, respectively. Catalyzes the coordinated movement of the two tRNA molecules, the mRNA and conformational changes in the ribosome. This is Elongation factor G from Pelodictyon phaeoclathratiforme (strain DSM 5477 / BU-1).